A 285-amino-acid polypeptide reads, in one-letter code: Nucleotide-binding protein FMG_1084 (285 aa).

8 to 15 (GMSGAGKS) lines the ATP pocket. 59–62 (DIRG) lines the GTP pocket.

This sequence belongs to the RapZ-like family.

Functionally, displays ATPase and GTPase activities. This Finegoldia magna (strain ATCC 29328 / DSM 20472 / WAL 2508) (Peptostreptococcus magnus) protein is Nucleotide-binding protein FMG_1084.